Reading from the N-terminus, the 343-residue chain is N-acetyl-gamma-glutamyl-phosphate reductase (343 aa).

Cysteine 147 is a catalytic residue.

It belongs to the NAGSA dehydrogenase family. Type 1 subfamily.

Its subcellular location is the cytoplasm. It carries out the reaction N-acetyl-L-glutamate 5-semialdehyde + phosphate + NADP(+) = N-acetyl-L-glutamyl 5-phosphate + NADPH + H(+). It functions in the pathway amino-acid biosynthesis; L-arginine biosynthesis; N(2)-acetyl-L-ornithine from L-glutamate: step 3/4. Functionally, catalyzes the NADPH-dependent reduction of N-acetyl-5-glutamyl phosphate to yield N-acetyl-L-glutamate 5-semialdehyde. This chain is N-acetyl-gamma-glutamyl-phosphate reductase, found in Listeria monocytogenes serovar 1/2a (strain ATCC BAA-679 / EGD-e).